The sequence spans 149 residues: Pleckstrin homology domain-containing family J member 1 (149 aa).

Residues 15–108 (PAEKAAEILM…WIEALKRASY (94 aa)) form the PH domain.

This is Pleckstrin homology domain-containing family J member 1 (PLEKHJ1) from Gallus gallus (Chicken).